The primary structure comprises 309 residues: Tagatose-6-phosphate kinase (309 aa).

Belongs to the carbohydrate kinase PfkB family. LacC subfamily.

It carries out the reaction D-tagatofuranose 6-phosphate + ATP = D-tagatofuranose 1,6-bisphosphate + ADP + H(+). It functions in the pathway carbohydrate metabolism; D-tagatose 6-phosphate degradation; D-glyceraldehyde 3-phosphate and glycerone phosphate from D-tagatose 6-phosphate: step 1/2. The polypeptide is Tagatose-6-phosphate kinase (Streptococcus pyogenes serotype M1).